Here is a 421-residue protein sequence, read N- to C-terminus: ATP-dependent RNA helicase RhlB (421 aa).

A Q motif motif is present at residues 9-37; it reads QKFSDFALHPKVVEALEKKGFHNCTPIQA. A Helicase ATP-binding domain is found at 40–219; it reads LPLTLAGRDV…FEQMNNAEYI (180 aa). 53-60 contacts ATP; sequence AQTGTGKT. The DEAD box motif lies at 165–168; sequence DEAD. A Helicase C-terminal domain is found at 245–390; the sequence is RLLQTLIEEE…VSKYNPDALM (146 aa). A disordered region spans residues 392–421; that stretch reads DLPKPLRLTRPRTGNGPRRTGAPRNRRRSG. The span at 402–414 shows a compositional bias: low complexity; the sequence is PRTGNGPRRTGAP.

Belongs to the DEAD box helicase family. RhlB subfamily. In terms of assembly, component of the RNA degradosome, which is a multiprotein complex involved in RNA processing and mRNA degradation.

Its subcellular location is the cytoplasm. The catalysed reaction is ATP + H2O = ADP + phosphate + H(+). In terms of biological role, DEAD-box RNA helicase involved in RNA degradation. Has RNA-dependent ATPase activity and unwinds double-stranded RNA. In Escherichia coli O157:H7 (strain EC4115 / EHEC), this protein is ATP-dependent RNA helicase RhlB.